The chain runs to 365 residues: Ribosomal RNA large subunit methyltransferase M (365 aa).

S-adenosyl-L-methionine is bound by residues serine 194, 227 to 230 (CPGG), aspartate 246, aspartate 266, and aspartate 284. Lysine 313 serves as the catalytic Proton acceptor.

The protein belongs to the class I-like SAM-binding methyltransferase superfamily. RNA methyltransferase RlmE family. RlmM subfamily. As to quaternary structure, monomer.

It is found in the cytoplasm. The enzyme catalyses cytidine(2498) in 23S rRNA + S-adenosyl-L-methionine = 2'-O-methylcytidine(2498) in 23S rRNA + S-adenosyl-L-homocysteine + H(+). Catalyzes the 2'-O-methylation at nucleotide C2498 in 23S rRNA. This Pasteurella multocida (strain Pm70) protein is Ribosomal RNA large subunit methyltransferase M.